The sequence spans 85 residues: Large ribosomal subunit protein bL27 (85 aa).

Positions Met-1–Leu-21 are disordered.

This sequence belongs to the bacterial ribosomal protein bL27 family.

This is Large ribosomal subunit protein bL27 from Pseudomonas entomophila (strain L48).